A 205-amino-acid chain; its full sequence is Adenylyl-sulfate kinase (205 aa).

31-38 (GLSGSGKS) is an ATP binding site. Ser105 functions as the Phosphoserine intermediate in the catalytic mechanism.

Belongs to the APS kinase family.

The catalysed reaction is adenosine 5'-phosphosulfate + ATP = 3'-phosphoadenylyl sulfate + ADP + H(+). Its pathway is sulfur metabolism; hydrogen sulfide biosynthesis; sulfite from sulfate: step 2/3. In terms of biological role, catalyzes the synthesis of activated sulfate. The sequence is that of Adenylyl-sulfate kinase from Shewanella halifaxensis (strain HAW-EB4).